A 276-amino-acid chain; its full sequence is Large ribosomal subunit protein uL2 (276 aa).

The segment at 224 to 276 (AMNPIDHPHGGGEGKTSGGRNPVTPWGVSTKGKKTRKKNKSSNKYIKRVSDKG) is disordered. Over residues 254–270 (KGKKTRKKNKSSNKYIK) the composition is skewed to basic residues.

The protein belongs to the universal ribosomal protein uL2 family. Part of the 50S ribosomal subunit. Forms a bridge to the 30S subunit in the 70S ribosome.

One of the primary rRNA binding proteins. Required for association of the 30S and 50S subunits to form the 70S ribosome, for tRNA binding and peptide bond formation. It has been suggested to have peptidyltransferase activity; this is somewhat controversial. Makes several contacts with the 16S rRNA in the 70S ribosome. The protein is Large ribosomal subunit protein uL2 of Ehrlichia ruminantium (strain Gardel).